The following is a 226-amino-acid chain: PKHD-type hydroxylase PP_0862 (226 aa).

The Fe2OG dioxygenase domain occupies 78-178 (KVFPPLINCY…RYAAFFWTQS (101 aa)). Residues histidine 96, aspartate 98, and histidine 159 each contribute to the Fe cation site. Arginine 169 serves as a coordination point for 2-oxoglutarate.

The cofactor is Fe(2+). L-ascorbate is required as a cofactor.

The sequence is that of PKHD-type hydroxylase PP_0862 from Pseudomonas putida (strain ATCC 47054 / DSM 6125 / CFBP 8728 / NCIMB 11950 / KT2440).